We begin with the raw amino-acid sequence, 108 residues long: Phosphoribosyl-ATP pyrophosphatase (108 aa).

Belongs to the PRA-PH family.

The protein localises to the cytoplasm. The enzyme catalyses 1-(5-phospho-beta-D-ribosyl)-ATP + H2O = 1-(5-phospho-beta-D-ribosyl)-5'-AMP + diphosphate + H(+). It functions in the pathway amino-acid biosynthesis; L-histidine biosynthesis; L-histidine from 5-phospho-alpha-D-ribose 1-diphosphate: step 2/9. This chain is Phosphoribosyl-ATP pyrophosphatase, found in Chromobacterium violaceum (strain ATCC 12472 / DSM 30191 / JCM 1249 / CCUG 213 / NBRC 12614 / NCIMB 9131 / NCTC 9757 / MK).